A 147-amino-acid chain; its full sequence is Large ribosomal subunit protein bL9 (147 aa).

The protein belongs to the bacterial ribosomal protein bL9 family.

Its function is as follows. Binds to the 23S rRNA. The protein is Large ribosomal subunit protein bL9 of Halothermothrix orenii (strain H 168 / OCM 544 / DSM 9562).